Reading from the N-terminus, the 139-residue chain is Peptide methionine sulfoxide reductase MsrB (139 aa).

A MsrB domain is found at 17-139 (EEQWRRELSP…NSAALKLEPK (123 aa)). 4 residues coordinate Zn(2+): Cys56, Cys59, Cys105, and Cys108. Residue Cys128 is the Nucleophile of the active site.

It belongs to the MsrB Met sulfoxide reductase family. Zn(2+) serves as cofactor.

It carries out the reaction L-methionyl-[protein] + [thioredoxin]-disulfide + H2O = L-methionyl-(R)-S-oxide-[protein] + [thioredoxin]-dithiol. The protein is Peptide methionine sulfoxide reductase MsrB of Bradyrhizobium diazoefficiens (strain JCM 10833 / BCRC 13528 / IAM 13628 / NBRC 14792 / USDA 110).